Here is a 420-residue protein sequence, read N- to C-terminus: Serine/threonine transporter SstT (420 aa).

Transmembrane regions (helical) follow at residues 14–34 (IMIG…WTFI), 40–60 (LFVG…IIAS), 71–91 (YVGS…VVAV), 172–192 (ITTV…GLVF), 210–230 (LLLL…AIVF), 283–303 (IPLG…IMTL), 309–329 (LGMS…AVSA), 332–352 (ASGI…LFGI), and 356–376 (IAMQ…SIET).

This sequence belongs to the dicarboxylate/amino acid:cation symporter (DAACS) (TC 2.A.23) family.

The protein resides in the cell membrane. The enzyme catalyses L-serine(in) + Na(+)(in) = L-serine(out) + Na(+)(out). The catalysed reaction is L-threonine(in) + Na(+)(in) = L-threonine(out) + Na(+)(out). Involved in the import of serine and threonine into the cell, with the concomitant import of sodium (symport system). The protein is Serine/threonine transporter SstT of Enterococcus faecalis (strain ATCC 700802 / V583).